Here is a 339-residue protein sequence, read N- to C-terminus: Anthranilate phosphoribosyltransferase (339 aa).

5-phospho-alpha-D-ribose 1-diphosphate contacts are provided by residues G79, 82-83 (GD), T87, 89-92 (NIST), 107-115 (KHGNRAVSS), and S119. G79 is an anthranilate binding site. S91 serves as a coordination point for Mg(2+). N110 is an anthranilate binding site. An anthranilate-binding site is contributed by R165. Mg(2+)-binding residues include D224 and E225.

It belongs to the anthranilate phosphoribosyltransferase family. Homodimer. The cofactor is Mg(2+).

It catalyses the reaction N-(5-phospho-beta-D-ribosyl)anthranilate + diphosphate = 5-phospho-alpha-D-ribose 1-diphosphate + anthranilate. It functions in the pathway amino-acid biosynthesis; L-tryptophan biosynthesis; L-tryptophan from chorismate: step 2/5. Catalyzes the transfer of the phosphoribosyl group of 5-phosphorylribose-1-pyrophosphate (PRPP) to anthranilate to yield N-(5'-phosphoribosyl)-anthranilate (PRA). This is Anthranilate phosphoribosyltransferase from Geobacillus thermodenitrificans (strain NG80-2).